A 319-amino-acid polypeptide reads, in one-letter code: Cell division protein FtsQ (319 aa).

The interval 1-53 (MDSREDMVPDVLLEAPNPRRRQSADTSTERPTRPARREQGYARVTPRGERMGN) is disordered. The Cytoplasmic portion of the chain corresponds to 1-70 (MDSREDMVPD…PDFFAWFDPR (70 aa)). The span at 27 to 52 (STERPTRPARREQGYARVTPRGERMG) shows a compositional bias: basic and acidic residues. The chain crosses the membrane as a helical span at residues 71 to 87 (WLWVPLMVCLAVGGYWA). Over 88 to 319 (YEPLEKLLER…NATRNAPTHP (232 aa)) the chain is Periplasmic. One can recognise a POTRA domain in the interval 97 to 166 (RPFKSVVVEG…DTLVVKIAEQ (70 aa)).

Belongs to the FtsQ/DivIB family. FtsQ subfamily. In terms of assembly, part of a complex composed of FtsB, FtsL and FtsQ.

Its subcellular location is the cell inner membrane. In terms of biological role, essential cell division protein. May link together the upstream cell division proteins, which are predominantly cytoplasmic, with the downstream cell division proteins, which are predominantly periplasmic. May control correct divisome assembly. This chain is Cell division protein FtsQ, found in Cellvibrio japonicus (strain Ueda107) (Pseudomonas fluorescens subsp. cellulosa).